Reading from the N-terminus, the 272-residue chain is Putative hydro-lyase Rpal_1947 (272 aa).

The protein belongs to the D-glutamate cyclase family.

The polypeptide is Putative hydro-lyase Rpal_1947 (Rhodopseudomonas palustris (strain TIE-1)).